We begin with the raw amino-acid sequence, 211 residues long: Superoxide dismutase [Mn] (211 aa).

Positions 27, 82, 165, and 169 each coordinate Mn(2+).

The protein belongs to the iron/manganese superoxide dismutase family. In terms of assembly, homodimer. Mn(2+) is required as a cofactor.

It carries out the reaction 2 superoxide + 2 H(+) = H2O2 + O2. Functionally, destroys superoxide anion radicals which are normally produced within the cells and which are toxic to biological systems. The chain is Superoxide dismutase [Mn] (sodA) from Bordetella pertussis (strain Tohama I / ATCC BAA-589 / NCTC 13251).